A 202-amino-acid polypeptide reads, in one-letter code: Dephospho-CoA kinase (202 aa).

Residues 6–202 enclose the DPCK domain; it reads KISVTGDPSS…QCFKALKGTI (197 aa). 14–19 lines the ATP pocket; that stretch reads SSGKTE.

The protein belongs to the CoaE family.

Its subcellular location is the cytoplasm. It catalyses the reaction 3'-dephospho-CoA + ATP = ADP + CoA + H(+). The protein operates within cofactor biosynthesis; coenzyme A biosynthesis; CoA from (R)-pantothenate: step 5/5. Catalyzes the phosphorylation of the 3'-hydroxyl group of dephosphocoenzyme A to form coenzyme A. The polypeptide is Dephospho-CoA kinase (Chlamydia trachomatis serovar A (strain ATCC VR-571B / DSM 19440 / HAR-13)).